The chain runs to 434 residues: Eukaryotic translation initiation factor 3 subunit E (434 aa).

One can recognise a PCI domain in the interval 219 to 392 (FFNHPKGRDL…GHVVMGTQPL (174 aa)).

Belongs to the eIF-3 subunit E family. As to quaternary structure, component of the eukaryotic translation initiation factor 3 (eIF-3) complex. The eIF-3 complex interacts with pix. Interacts with mxt.

Its subcellular location is the cytoplasm. Component of the eukaryotic translation initiation factor 3 (eIF-3) complex, which is involved in protein synthesis of a specialized repertoire of mRNAs and, together with other initiation factors, stimulates binding of mRNA and methionyl-tRNAi to the 40S ribosome. The eIF-3 complex specifically targets and initiates translation of a subset of mRNAs involved in cell proliferation. This chain is Eukaryotic translation initiation factor 3 subunit E (eIF3-S6), found in Drosophila grimshawi (Hawaiian fruit fly).